Consider the following 180-residue polypeptide: ATP-dependent protease subunit HslV (180 aa).

Thr-5 is an active-site residue. Residues Gly-161, Cys-164, and Thr-167 each contribute to the Na(+) site.

The protein belongs to the peptidase T1B family. HslV subfamily. In terms of assembly, a double ring-shaped homohexamer of HslV is capped on each side by a ring-shaped HslU homohexamer. The assembly of the HslU/HslV complex is dependent on binding of ATP.

It is found in the cytoplasm. The catalysed reaction is ATP-dependent cleavage of peptide bonds with broad specificity.. Its activity is regulated as follows. Allosterically activated by HslU binding. Functionally, protease subunit of a proteasome-like degradation complex believed to be a general protein degrading machinery. The protein is ATP-dependent protease subunit HslV of Campylobacter lari (strain RM2100 / D67 / ATCC BAA-1060).